The following is a 238-amino-acid chain: Uridylate kinase (238 aa).

Lysine 12–glycine 15 lines the ATP pocket. UMP is bound at residue glycine 54. 2 residues coordinate ATP: glycine 55 and arginine 59. UMP is bound by residues aspartate 74 and threonine 135–threonine 142. ATP contacts are provided by threonine 162, asparagine 163, tyrosine 168, and aspartate 171.

It belongs to the UMP kinase family. Homohexamer.

Its subcellular location is the cytoplasm. It catalyses the reaction UMP + ATP = UDP + ADP. It functions in the pathway pyrimidine metabolism; CTP biosynthesis via de novo pathway; UDP from UMP (UMPK route): step 1/1. Inhibited by UTP. In terms of biological role, catalyzes the reversible phosphorylation of UMP to UDP. This Nitrobacter hamburgensis (strain DSM 10229 / NCIMB 13809 / X14) protein is Uridylate kinase.